Reading from the N-terminus, the 463-residue chain is Competence protein ComFA (463 aa).

Cysteine 60, cysteine 63, cysteine 84, and cysteine 87 together coordinate Zn(2+). A Helicase ATP-binding domain is found at isoleucine 133 to isoleucine 285. Alanine 146 to threonine 153 is an ATP binding site. The DEAD box motif lies at aspartate 233–aspartate 236. The Helicase C-terminal domain maps to alanine 317–aspartate 463.

This sequence belongs to the DEAD box helicase family. In terms of assembly, monomer and dimer in solution. Interacts with DprA and ComFC; ComFA-ComFC form rings about 150 Angstroms in diameter with apparent 6-fold symmetry. Requires Zn(2+) as cofactor.

It localises to the cytoplasm. Involved in transformation (genetic competence for DNA uptake). Required for DNA uptake but not for DNA binding to cells. DNA uptake is energy dependent, this protein may provide the driving force for DNA uptake. Does not have helicase activity, translocates on single-stranded (ss)DNA in a 5'-3' direction in an ATP-dependent manner, but does not unwind double-stranded (ds)DNA. ATP hydrolysis causes the release of ssDNA from ComFA. A ssDNA-stimulated ATPase; dsDNA does not stimulate ATPase. ATP hydrolysis causes the release of ssDNA from ComFA. Binds ssDNA but only very poorly to dsDNA in the absence of ATP. Binding to ssDNA does not require free DNA ends. The sequence is that of Competence protein ComFA from Bacillus subtilis (strain 168).